A 249-amino-acid polypeptide reads, in one-letter code: 2,3,4,5-tetrahydropyridine-2,6-dicarboxylate N-acetyltransferase (249 aa).

This sequence belongs to the transferase hexapeptide repeat family. DapH subfamily.

It carries out the reaction (S)-2,3,4,5-tetrahydrodipicolinate + acetyl-CoA + H2O = L-2-acetamido-6-oxoheptanedioate + CoA. Its pathway is amino-acid biosynthesis; L-lysine biosynthesis via DAP pathway; LL-2,6-diaminopimelate from (S)-tetrahydrodipicolinate (acetylase route): step 1/3. Functionally, catalyzes the transfer of an acetyl group from acetyl-CoA to tetrahydrodipicolinate. This chain is 2,3,4,5-tetrahydropyridine-2,6-dicarboxylate N-acetyltransferase, found in Fervidobacterium nodosum (strain ATCC 35602 / DSM 5306 / Rt17-B1).